The following is a 397-amino-acid chain: Cathepsin E (397 aa).

Residues 1–16 form the signal peptide; sequence MKQFLVVLLILSFVHG. The propeptide at 17–49 is activation peptide; it reads IIRVPLKRQKSMRKILKEKGKLSHLWTKQGNEF. Residues 74-385 enclose the Peptidase A1 domain; that stretch reads YFGQISIGTP…DRGNNRVGFA (312 aa). Aspartate 92 is an active-site residue. Residues cysteine 105 and cysteine 110 are joined by a disulfide bond. Asparagine 139 is a glycosylation site (N-linked (GlcNAc...) asparagine). Cysteine 268 and cysteine 272 are oxidised to a cystine. The active site involves aspartate 277. Residues cysteine 310 and cysteine 344 are joined by a disulfide bond.

This sequence belongs to the peptidase A1 family. As to quaternary structure, homodimer; disulfide-linked. In terms of processing, glycosylated. Contains high mannose-type oligosaccharide. As to expression, found in the larval foregut and adult stomach.

It localises to the endosome. It catalyses the reaction Similar to cathepsin D, but slightly broader specificity.. In terms of biological role, may have a role in immune function. Probably involved in the processing of antigenic peptides during MHC class II-mediated antigen presentation. This Aquarana catesbeiana (American bullfrog) protein is Cathepsin E (CTSE).